A 388-amino-acid chain; its full sequence is Lysocardiolipin acyltransferase 1 (388 aa).

Transmembrane regions (helical) follow at residues 9 to 29 and 46 to 66; these read FLLF…GPLL and IVAT…GVKV. The HXXXXD motif signature appears at 85–90; that stretch reads HRTRLD. Transmembrane regions (helical) follow at residues 321–341 and 342–362; these read IILV…CASL and CLCP…LCQQ.

The protein belongs to the 1-acyl-sn-glycerol-3-phosphate acyltransferase family.

The protein resides in the endoplasmic reticulum membrane. It catalyses the reaction a 1-acyl-sn-glycero-3-phosphate + an acyl-CoA = a 1,2-diacyl-sn-glycero-3-phosphate + CoA. The enzyme catalyses a 1-acyl-sn-glycero-3-phospho-(1D-myo-inositol) + an acyl-CoA = a 1,2-diacyl-sn-glycero-3-phospho-(1D-myo-inositol) + CoA. It carries out the reaction 1-acyl-sn-glycero-3-phospho-(1'-sn-glycerol) + an acyl-CoA = a 1,2-diacyl-sn-glycero-3-phospho-(1'-sn-glycerol) + CoA. The catalysed reaction is 1-hexadecanoyl-sn-glycero-3-phosphate + (9Z)-octadecenoyl-CoA = 1-hexadecanoyl-2-(9Z-octadecenoyl)-sn-glycero-3-phosphate + CoA. It catalyses the reaction 1-(9Z-octadecenoyl)-sn-glycero-3-phosphate + (9Z)-octadecenoyl-CoA = 1,2-di-(9Z-octadecenoyl)-sn-glycero-3-phosphate + CoA. The enzyme catalyses 1-(9Z,12Z)-octadecadienoyl-sn-glycero-3-phosphate + (9Z)-octadecenoyl-CoA = 1-(9Z,12Z)-octadecadienoyl-2-(9Z)-octadecenoyl-sn-glycero-3-phosphate + CoA. It carries out the reaction 1-(9Z,12Z,15Z)-octadecatrienoyl-sn-glycero-3-phosphate + (9Z)-octadecenoyl-CoA = 1-(9Z,12Z,15Z)-octadecatrienoyl-2-(9Z)-octadecenoyl-sn-glycero-3-phosphate + CoA. The catalysed reaction is 1-(9Z-octadecenoyl)-sn-glycero-3-phosphate + hexadecanoyl-CoA = 1-(9Z)-octadecenoyl-2-hexadecanoyl-sn-glycero-3-phosphate + CoA. It catalyses the reaction 1-(9Z-octadecenoyl)-sn-glycero-3-phosphate + octadecanoyl-CoA = 1-(9Z-octadecenoyl)-2-octadecanoyl-sn-glycero-3-phosphate + CoA. The enzyme catalyses 1-acyl-sn-glycero-3-phospho-(1'-sn-glycerol) + (9Z)-octadecenoyl-CoA = 1-acyl-2-(9Z-octadecenoyl)-sn-glycero-3-phospho-(1'-sn-glycerol) + CoA. It carries out the reaction a 1-acyl-sn-glycero-3-phospho-(1D-myo-inositol) + (9Z)-octadecenoyl-CoA = a 1-acyl-2-(9Z-octadecenoyl)-sn-glycero-3-phospho-(1D-myo-inositol) + CoA. The catalysed reaction is 1-hexadecanoyl-sn-glycero-3-phospho-(1D-myo-inositol) + hexadecanoyl-CoA = 1,2-dihexadecanoyl-sn-glycero-3-phospho-(1D-myo-inositol) + CoA. It catalyses the reaction 1-hexadecanoyl-sn-glycero-3-phospho-(1D-myo-inositol) + octadecanoyl-CoA = 1-hexadecanoyl-2-octadecanoyl-sn-glycero-3-phospho-(1D-myo-inositol) + CoA. The enzyme catalyses 1-hexadecanoyl-sn-glycero-3-phospho-(1D-myo-inositol) + (9Z)-octadecenoyl-CoA = 1-hexadecanoyl-2-(9Z-octadecenoyl)-sn-glycero-3-phospho-(1D-myo-inositol) + CoA. It carries out the reaction 1-hexadecanoyl-sn-glycero-3-phospho-(1D-myo-inositol) + (9Z,12Z)-octadecadienoyl-CoA = 1-hexadecanoyl-2-(9Z,12Z-octadecadienoyl)-sn-glycero-3-phospho-(1D-myo-inositol) + CoA. The catalysed reaction is 1-hexadecanoyl-sn-glycero-3-phospho-(1D-myo-inositol) + (5Z,8Z,11Z,14Z)-eicosatetraenoyl-CoA = 1-hexadecanoyl-2-(5Z,8Z,11Z,14Z-eicosatetraenoyl)-sn-glycero-3-phospho-D-myo-inositol + CoA. It catalyses the reaction 1-hexadecanoyl-sn-glycero-3-phospho-(1'-sn-glycerol) + hexadecanoyl-CoA = 1,2-dihexadecanoyl-sn-glycero-3-phospho-(1'-sn-glycerol) + CoA. The enzyme catalyses 1-hexadecanoyl-sn-glycero-3-phospho-(1'-sn-glycerol) + octadecanoyl-CoA = 1-hexadecanoyl-2-octadecanoyl-sn-glycero-3-phospho-(1'-sn-glycerol) + CoA. It carries out the reaction 1-hexadecanoyl-sn-glycero-3-phospho-(1'-sn-glycerol) + (9Z)-octadecenoyl-CoA = 1-hexadecanoyl-2-(9Z-octadecenoyl)-sn-glycero-3-phospho-(1'-sn-glycerol) + CoA. The catalysed reaction is 1-hexadecanoyl-sn-glycero-3-phospho-(1'-sn-glycerol) + (9Z,12Z)-octadecadienoyl-CoA = 1-hexadecanoyl-2-(9Z,12Z-octadecadienoyl)-sn-glycero-3-phospho-(1'-sn-glycerol) + CoA. It catalyses the reaction 1-tetradecanoyl-sn-glycero-3-phospho-(1'-sn-glycerol) + (9Z)-octadecenoyl-CoA = 1-tetradecanoyl-2-(9Z-octadecenoyl)-sn-glycero-3-phospho-(1'-sn-glycerol) + CoA. The enzyme catalyses 1-octadecanoyl-sn-glycero-3-phospho-(1'-sn-glycerol) + (9Z)-octadecenoyl-CoA = 1-octadecanoyl-2-(9Z-octadecenoyl)-sn-glycero-3-phospho-(1'-sn-glycerol) + CoA. It carries out the reaction 1-(9Z-octadecenoyl)-sn-glycero-3-phospho-(1'-sn-glycerol) + (9Z)-octadecenoyl-CoA = 1,2-di-(9Z-octadecenoyl)-sn-glycero-3-phospho-(1'-sn-glycerol) + CoA. The catalysed reaction is 1-hexadecanoyl-sn-glycero-3-phospho-(1D-myo-inositol) + dodecanoyl-CoA = 1-hexadecanoyl-2-dodecanoyl-sn-glycero-3-phospho-(1D-myo-inositol) + CoA. It catalyses the reaction 1',3'-bis-[1-acyl-sn-glycero-3-phospho]-glycerol + (9Z)-octadecenoyl-CoA = 1'-[1-acyl-2-(9Z)-octadecenoyl-sn-glycero-3-phospho],3'-[1-acyl,2-hydroxy-sn-glycero-3-phospho]-glycerol + CoA. The enzyme catalyses 1'-[1,2-diacyl-sn-glycero-3-phospho],3'-[1-acyl-sn-glycero-3-phospho]-glycerol + (9Z)-octadecenoyl-CoA = 1'-[1,2-diacyl-sn-glycero-3-phospho],3'-[1-acyl,2-(9Z)-octadecenoyl-sn-glycero-3-phospho]-glycerol + CoA. It carries out the reaction 1'-[1,2-diacyl-sn-glycero-3-phospho],3'-[1-acyl-sn-glycero-3-phospho]-glycerol + (9Z,12Z)-octadecadienoyl-CoA = 1'-[1,2-diacyl-sn-glycero-3-phospho],3'-[1-acyl,2-(9Z,12Z)-octadecadienoyl-sn-glycero-3-phospho]-glycerol + CoA. The catalysed reaction is 1'-[1,2-diacyl-sn-glycero-3-phospho],3'-[1-acyl-sn-glycero-3-phospho]-glycerol + dodecanoyl-CoA = 1'-[1,2-diacyl-sn-glycero-3-phospho],3'-[1-acyl,2-dodecanoyl-sn-glycero-3-phospho]-glycerol + CoA. It catalyses the reaction 1',3'-bis-[1-acyl-sn-glycero-3-phospho]-glycerol + dodecanoyl-CoA = 1'-[1-acyl-2-dodecanoyl-sn-glycero-3-phospho],3'-[1-acyl,2-hydroxy-sn-glycero-3-phospho]-glycerol + CoA. The enzyme catalyses a 1-acyl-sn-glycero-3-phosphate + (9Z)-octadecenoyl-CoA = a 1-acyl-2-(9Z-octadecenoyl)-sn-glycero-3-phosphate + CoA. It carries out the reaction 1',3'-bis-[1-acyl-sn-glycero-3-phospho]-glycerol + (9Z,12Z)-octadecadienoyl-CoA = 1'-[1-acyl-2-(9Z,12Z)-octadecadienoyl-sn-glycero-3-phospho],3'-[1-acyl,2-hydroxy-sn-glycero-3-phospho]-glycerol + CoA. The catalysed reaction is 1',3'-bis-[1-acyl-sn-glycero-3-phospho]-glycerol + hexadecanoyl-CoA = 1'-[1-acyl-2-hexadecanoyl-sn-glycero-3-phospho],3'-[1-acyl,2-hydroxy-sn-glycero-3-phospho]-glycerol + CoA. It catalyses the reaction 1',3'-bis-[1-acyl-sn-glycero-3-phospho]-glycerol + octadecanoyl-CoA = 1'-[1-acyl-2-octadecanoyl-sn-glycero-3-phospho],3'-[1-acyl,2-hydroxy-sn-glycero-3-phospho]-glycerol + CoA. The enzyme catalyses 1'-[1,2-diacyl-sn-glycero-3-phospho],3'-[1-acyl-sn-glycero-3-phospho]-glycerol + octanoyl-CoA = 1'-[1,2-diacyl-sn-glycero-3-phospho],3'-[1-acyl,2-octanoyl-sn-glycero-3-phospho]-glycerol + CoA. It carries out the reaction 1',3'-bis-[1-acyl-sn-glycero-3-phospho]-glycerol + octanoyl-CoA = 1'-[1-acyl-2-octanoyl-sn-glycero-3-phospho],3'-[1-acyl,2-hydroxy-sn-glycero-3-phospho]-glycerol + CoA. The catalysed reaction is 1'-[1,2-diacyl-sn-glycero-3-phospho],3'-[1-acyl-sn-glycero-3-phospho]-glycerol + hexadecanoyl-CoA = 1'-[1,2-diacyl-sn-glycero-3-phospho],3'-[1-acyl,2-hexadecanoyl-sn-glycero-3-phospho]-glycerol + CoA. It catalyses the reaction 1'-[1,2-diacyl-sn-glycero-3-phospho],3'-[1-acyl-sn-glycero-3-phospho]-glycerol + (5Z,8Z,11Z,14Z)-eicosatetraenoyl-CoA = 1'-[1,2-diacyl-sn-glycero-3-phospho],3'-[1-acyl,2-(5Z,8Z,11Z,14Z)-eicosatetraenoyl-sn-glycero-3-phospho]-glycerol + CoA. The enzyme catalyses 1',3'-bis-[1-acyl-sn-glycero-3-phospho]-glycerol + (5Z,8Z,11Z,14Z)-eicosatetraenoyl-CoA = 1'-[1-acyl-2-(5Z,8Z,11Z,14Z)-eicosatetraenoyl-sn-glycero-3-phospho],3'-[1-acyl,2-hydroxy-sn-glycero-3-phospho]-glycerol + CoA. It carries out the reaction a 1-acyl-sn-glycero-3-phospho-(1D-myo-inositol) + octadecanoyl-CoA = a 1-acyl-2-octadecanoyl-sn-glycero-3-phospho-(1D-myo-inositol) + CoA. The catalysed reaction is a 2-acyl-sn-glycero-3-phospho-D-myo-inositol + octadecanoyl-CoA = 1-octadecanoyl-2-acyl-sn-glycero-3-phospho-1D-myo-inositol + CoA. The protein operates within phospholipid metabolism; CDP-diacylglycerol biosynthesis; CDP-diacylglycerol from sn-glycerol 3-phosphate: step 2/3. Functionally, exhibits acyl-CoA:lysocardiolipin acyltransferase (ALCAT) activity; catalyzes the reacylation of lyso-cardiolipin to cardiolipin (CL), a key step in CL remodeling. Recognizes both monolysocardiolipin and dilysocardiolipin as substrates with a preference for linoleoyl-CoA and oleoyl-CoA as acyl donors. Also exhibits 1-acyl-sn-glycerol-3-phosphate acyltransferase activity (AGPAT) activity; converts 1-acyl-sn-glycerol-3- phosphate (lysophosphatidic acid or LPA) into 1,2-diacyl-sn-glycerol-3- phosphate (phosphatidic acid or PA) by incorporating an acyl moiety at the sn-2 position of the glycerol backbone. Possesses both lysophosphatidylinositol acyltransferase (LPIAT) and lysophosphatidylglycerol acyltransferase (LPGAT) activities. Required for establishment of the hematopoietic and endothelial lineages. The protein is Lysocardiolipin acyltransferase 1 (lclat1) of Danio rerio (Zebrafish).